Here is a 501-residue protein sequence, read N- to C-terminus: ADP,ATP carrier protein 3 (501 aa).

The next 12 membrane-spanning stretches (helical) occupy residues Leu-23–Leu-43, Ile-59–Tyr-79, Tyr-90–Ile-110, Tyr-146–Trp-166, Pro-183–Phe-203, Ile-227–Phe-247, Ile-293–Ala-313, Val-326–Ile-346, Leu-361–Ile-381, Cys-387–Leu-407, Phe-446–Thr-466, and Ile-470–Ile-490.

The protein belongs to the ADP/ATP translocase tlc family.

It is found in the cell membrane. In terms of biological role, provides the rickettsial cell with host ATP in exchange for rickettsial ADP. This is an obligate exchange system. This energy acquiring activity is an important component of rickettsial parasitism. This is ADP,ATP carrier protein 3 (tlcC) from Rickettsia conorii (strain ATCC VR-613 / Malish 7).